A 497-amino-acid chain; its full sequence is Glucose-6-phosphate 1-dehydrogenase (497 aa).

NADP(+)-binding positions include 15–22 (GASGDLSK), R49, and K153. Residues K153, 183–187 (HYLGK), E221, and D240 each bind D-glucose 6-phosphate. The active-site Proton acceptor is H245. R336 serves as a coordination point for NADP(+). K339 serves as a coordination point for D-glucose 6-phosphate. NADP(+) contacts are provided by K345, R349, and R371. D-glucose 6-phosphate is bound at residue Q373. NADP(+) is bound by residues 379-381 (YLK), 399-401 (DLT), and R466.

This sequence belongs to the glucose-6-phosphate dehydrogenase family.

The catalysed reaction is D-glucose 6-phosphate + NADP(+) = 6-phospho-D-glucono-1,5-lactone + NADPH + H(+). It functions in the pathway carbohydrate degradation; pentose phosphate pathway; D-ribulose 5-phosphate from D-glucose 6-phosphate (oxidative stage): step 1/3. Catalyzes the rate-limiting step of the oxidative pentose-phosphate pathway, which represents a route for the dissimilation of carbohydrates besides glycolysis. The main function of this enzyme is to provide reducing power (NADPH) and pentose phosphates for fatty acid and nucleic acid synthesis. The polypeptide is Glucose-6-phosphate 1-dehydrogenase (ZWF) (Kluyveromyces lactis (strain ATCC 8585 / CBS 2359 / DSM 70799 / NBRC 1267 / NRRL Y-1140 / WM37) (Yeast)).